Reading from the N-terminus, the 492-residue chain is Virion host shutoff protein (492 aa).

Disordered stretches follow at residues 110 to 130, 143 to 165, 288 to 307, and 334 to 369; these read EEAS…SRPS, FAPG…GAPS, SQAR…LESM, and EDDY…PPEL. Residues 144–165 show a composition bias toward low complexity; sequence APGDRGTRAAGPGPAAPSGAPS.

It belongs to the herpesviridae VHS protein family. In terms of assembly, interacts with human EIF4H, EIF4A1 and EIF4A2; interaction with eIF4AI and EIF4A2 presumably allows Vhs protein to associate with the eIF4F cap-binding complex.

The protein resides in the virion. Its function is as follows. Minor structural protein that acts as an endoribonuclease during lytic infection. Degrades host mRNAs in the cytoplasm by cutting them at preferred sites, including some in regions of translation initiation. Together with inhibition of host splicing by ICP27, contributes to an overall decrease in host protein synthesis. Also, after the onset of viral transcription, accelerates the turnover of viral mRNA, thereby facilitating the sequential expression of different classes of viral genes. Binds translation initiation factors eIF4H, eIF4AI, and eIF4AII, thereby may interact directly with the translation initiation complex and thus digest specifically mRNAs. Also impedes antigen presentation by major histocompatibility complex class I and class II molecules, inhibits secretion of cytokines that would otherwise recruit lymphocytes and neutrophils cells to the site of infection and blocks the activation of dendritic cells. Impedes the alpha/beta interferon-mediated response to infection. Inhibits the integrated stress response (ISR) in the infected cell, this function requires the endonuclease activity. Stress granule formation is thus inhibited, which allows protein synthesis and viral replication. In Human herpesvirus 2 (strain G) (HHV-2), this protein is Virion host shutoff protein (UL41).